The sequence spans 720 residues: Hexanoyl-CoA synthase (720 aa).

Residues 242 to 262 (VDAVVIYLAIVLAGYVVVSIA) traverse the membrane as a helical segment. Residue 290–293 (RGKK) coordinates CoA. ATP-binding positions include 477 to 479 (GEA), 499 to 504 (EMCGGT), Glu585, and Arg607. Residue Gly615 coordinates CoA. Lys618 serves as a coordination point for ATP. Residue Gln681 coordinates CoA.

This sequence belongs to the ATP-dependent AMP-binding enzyme family. Mg(2+) serves as cofactor. As to expression, accumulates in glandular trichomes, especially in female flowers. Present at low levels in roots, stems and leaves.

It localises to the cytoplasm. Its subcellular location is the cytosol. It is found in the membrane. The catalysed reaction is hexanoate + ATP + CoA = hexanoyl-CoA + AMP + diphosphate. It participates in secondary metabolite biosynthesis; terpenoid biosynthesis. Inhibitied by high CoA concentrations. In terms of biological role, involved in the biosynthesis of cannabinoids-related terpenophenolic natural products, which have pharmacological activity. Acyl-activating enzyme that catalyzes the conversion of hexanoic acid to hexanoyl-CoA, precursor of the cannabinoid pathway. Can also activate other fatty acids including heptanoate, octanoate and nonanoate. In Cannabis sativa (Hemp), this protein is Hexanoyl-CoA synthase.